The following is a 346-amino-acid chain: Putative D-threonate 4-phosphate dehydrogenase (346 aa).

2 residues coordinate substrate: histidine 141 and threonine 142. Residues histidine 171, histidine 215, and histidine 270 each contribute to the a divalent metal cation site. Residues lysine 278 and arginine 296 each contribute to the substrate site.

Belongs to the PdxA family. PdxA2 subfamily. In terms of assembly, homodimer. A divalent metal cation serves as cofactor.

It carries out the reaction 4-O-phospho-D-threonate + NAD(+) = dihydroxyacetone phosphate + CO2 + NADH. Its function is as follows. Catalyzes the NAD-dependent oxidation and subsequent decarboxylation of D-threonate 4-phosphate to produce dihydroxyacetone phosphate (DHAP). The chain is Putative D-threonate 4-phosphate dehydrogenase from Cutibacterium acnes (strain DSM 16379 / KPA171202) (Propionibacterium acnes).